The chain runs to 548 residues: Chaperonin GroEL (548 aa).

ATP is bound by residues 30-33 (TLGP), Lys51, 87-91 (DGTTT), Gly415, and Asp495.

Belongs to the chaperonin (HSP60) family. As to quaternary structure, forms a cylinder of 14 subunits composed of two heptameric rings stacked back-to-back. Interacts with the co-chaperonin GroES.

The protein localises to the cytoplasm. The enzyme catalyses ATP + H2O + a folded polypeptide = ADP + phosphate + an unfolded polypeptide.. Functionally, together with its co-chaperonin GroES, plays an essential role in assisting protein folding. The GroEL-GroES system forms a nano-cage that allows encapsulation of the non-native substrate proteins and provides a physical environment optimized to promote and accelerate protein folding. The chain is Chaperonin GroEL from Photorhabdus laumondii subsp. laumondii (strain DSM 15139 / CIP 105565 / TT01) (Photorhabdus luminescens subsp. laumondii).